A 756-amino-acid chain; its full sequence is Transient receptor potential cation channel subfamily V member 2 (756 aa).

A disordered region spans residues 1–45; the sequence is MTSASNPPAFRLETSDGDEEGSAEVNKGKNEPPPMESPFQGEDRN. A required for interaction with SLC50A1 region spans residues 1-385; the sequence is MTSASNPPAF…LLQEKWDRLI (385 aa). Residues 1-387 are Cytoplasmic-facing; it reads MTSASNPPAF…QEKWDRLIPR (387 aa). Phosphoserine is present on residues serine 15 and serine 77. ANK repeat units follow at residues 68-110, 111-157, 158-203, 204-239, 240-288, and 289-315; these read NRFD…TEGS, TGKT…DEFY, RGHS…TCFY, FGEL…ATDS, LGNT…ICNH, and QGLT…REFS. A helical transmembrane segment spans residues 388-408; that stretch reads FFFNFACYLVYMIIFTIVAYH. Over 409-428 the chain is Extracellular; it reads QPSLEQPAIPSSKATFGDSM. Residues 429–449 form a helical membrane-spanning segment; that stretch reads LLLGHILILLGGIYLLLGQLW. The Cytoplasmic segment spans residues 450–455; the sequence is YFWRRR. Residues 456-476 form a helical membrane-spanning segment; sequence LFIWISFMDSYFEILFLVQAL. The Extracellular portion of the chain corresponds to 477–490; it reads LTVLSQVLRFVETE. The helical transmembrane segment at 491–511 threads the bilayer; it reads WYLPLLVSSLVLGWLNLLYYT. The Cytoplasmic portion of the chain corresponds to 512–532; it reads RGFQHTGIYSVMIQKVILRDL. Residues 533 to 553 form a helical membrane-spanning segment; that stretch reads LRFLLVYLVFLFGFAVALVSL. Positions 559–583 are disordered; the sequence is SPKAPEDSNTTVTEKPTLGQEEEPV. Asparagine 567 carries an N-linked (GlcNAc...) asparagine glycan. The pore-forming intramembrane region spans 568–604; it reads TTVTEKPTLGQEEEPVPYGGILDASLELFKFTIGMGE. Residues 617–637 form a helical membrane-spanning segment; the sequence is VLLLLLAYVLLTYVLLLNMLI. Topologically, residues 638–756 are cytoplasmic; sequence ALMSETVNSV…HLPLQVLQSH (119 aa). The segment at 719–756 is disordered; the sequence is EDPSGAGITGYKKNPTSKPGKNSASEEDHLPLQVLQSH. Positions 732–741 are enriched in polar residues; that stretch reads NPTSKPGKNS. Phosphoserine occurs at positions 743 and 755.

The protein belongs to the transient receptor (TC 1.A.4) family. TrpV subfamily. TRPV2 sub-subfamily. As to quaternary structure, homotetramer. Interacts with a cAMP-dependent protein kinase type II regulatory subunit (PRKAR2A or PRKAR2B) and ACBD3. Interacts with SLC50A1; the interaction probably occurs intracellularly and depends on TRPV2 N-glycosylation. In terms of processing, N-glycosylated. Phosphorylated by PKA. Abundantly expressed in spleen, placenta, skeleton muscle, lung and brain.

It localises to the cell membrane. It is found in the cytoplasm. The protein resides in the melanosome. It carries out the reaction Ca(2+)(in) = Ca(2+)(out). It catalyses the reaction Mg(2+)(in) = Mg(2+)(out). The catalysed reaction is Na(+)(in) = Na(+)(out). The enzyme catalyses K(+)(in) = K(+)(out). Functionally, calcium-permeable, non-selective cation channel with an outward rectification. Seems to be regulated, at least in part, by IGF1, PDGF and neuropeptide head activator. May transduce physical stimuli in mast cells. Activated by temperatures higher than 52 degrees Celsius; is not activated by vanilloids and acidic pH. This is Transient receptor potential cation channel subfamily V member 2 (Trpv2) from Mus musculus (Mouse).